Consider the following 78-residue polypeptide: Large ribosomal subunit protein bL28 (78 aa).

The disordered stretch occupies residues 1 to 21; that stretch reads MSRVCQVTGKRPVSGNNRSHA.

This sequence belongs to the bacterial ribosomal protein bL28 family.

The chain is Large ribosomal subunit protein bL28 from Sodalis glossinidius (strain morsitans).